Reading from the N-terminus, the 411-residue chain is MNSIFSIDDFSDPFWETPPIPLNPDSSKPVTADEVSQSQPEWTFEMFLEEISSSAVSSEPLGNNNNAIVGVSSAQSLPSVSGQNDFEDDSRFRDRDSGNLDCAAPMTTKTVIVDSDDYRRVLKNKLETECATVVSLRVGSVKPEDSTSSPETQLQPVQSSPLTQGELGVTSSLPAEVKKTGVSMKQVTSGSSREYSDDEDLDEENETTGSLKPEDVKKSRRMLSNRESARRSRRRKQEQTSDLETQVNDLKGEHSSLLKQLSNMNHKYDEAAVGNRILKADIETLRAKVKMAEETVKRVTGMNPMLLGRSSGHNNNNRMPITGNNRMDSSSIIPAYQPHSNLNHMSNQNIGIPTILPPRLGNNFAAPPSQTSSPLQRIRNGQNHHVTPSANPYGWNTEPQNDSAWPKKCVD.

4 disordered regions span residues 1–36 (MNSI…DEVS), 76–99 (SLPS…DSGN), 140–251 (SVKP…NDLK), and 362–411 (NNFA…KCVD). Residues 24 to 36 (PDSSKPVTADEVS) show a composition bias toward polar residues. Over residues 89 to 98 (DSRFRDRDSG) the composition is skewed to basic and acidic residues. Polar residues-rich tracts occupy residues 146 to 173 (STSS…TSSL) and 183 to 193 (SMKQVTSGSSR). Phosphoserine is present on Ser196. Over residues 196–206 (SDDEDLDEENE) the composition is skewed to acidic residues. Residues 215–278 (DVKKSRRMLS…DEAAVGNRIL (64 aa)) enclose the bZIP domain. Residues 217–236 (KKSRRMLSNRESARRSRRRK) are basic motif. A Nuclear localization signal motif is present at residues 219-226 (SRRMLSNR). Residues 243–257 (LETQVNDLKGEHSSL) form a leucine-zipper region. Residues 368 to 390 (PSQTSSPLQRIRNGQNHHVTPSA) show a composition bias toward polar residues.

Belongs to the bZIP family. As to quaternary structure, forms a heterodimer with BZIP1, BZIP2, BZIP9, BZIP11, BZIP44, BZIP53 and BZIP63. Interacts with ABI3 and forms a complex made of ABI3, BZIP53 and BZIP10. Binding with LSD1 leads to cytoplasmic retention. In terms of tissue distribution, expressed in roots, shoots, stems, young leaves, trichomes, hydathodes, siliques, seeds, and flowers, mostly in vascular tissues.

It localises to the nucleus. It is found in the cytoplasm. In terms of biological role, transcription factor that binds to the C-box-like motif (5'-TGCTGACGTCA-3') and G-box-like motif (5'-CCACGTGGCC-3'), ABRE elements, of gene promoters. Binds to the 5'-ACGT-3' motif of seed storage protein (SSP) encoding gene promoters (e.g. At2S and CRU3) and promotes their expression in seeds when in complex with ABI3 and BZIP53. Involved in the defense responses to the biotrophic pathogen Hyaloperonospora parasitica and oxidative stress responses; mediates positively cell death. Promotes BZIP53-mediated response to hypoosmolarity stress that leads to POX1/PRODH1 accumulation. The chain is Basic leucine zipper 10 (BZIP10) from Arabidopsis thaliana (Mouse-ear cress).